The primary structure comprises 645 residues: Cyclic nucleotide-gated channel rod photoreceptor subunit alpha (645 aa).

Residues 1 to 121 (MKVGVIETHH…PAGNMYYNWL (121 aa)) are Cytoplasmic-facing. Residues 53–100 (NNNSNKDEEKKKKKEKKSKSENKKDGERQKNKEKKEKHKNKDKKKGKE) form a disordered region. The span at 70 to 86 (SKSENKKDGERQKNKEK) shows a compositional bias: basic and acidic residues. Over residues 87–96 (KEKHKNKDKK) the composition is skewed to basic residues. Residues 122-143 (FCITMPVMYNWTMIIARACFDE) form a helical membrane-spanning segment. Residues 144–153 (LQNDYLAVWF) lie on the Extracellular side of the membrane. The helical transmembrane segment at 154–174 (IVDYVSDVIYIADMFVRTRTG) threads the bilayer. The Cytoplasmic segment spans residues 175 to 199 (YLEQGLLVKEEQKLKEKYKSSLQFK). The helical transmembrane segment at 200-218 (LDFLSIIPTDLLYFKLGLN) threads the bilayer. Residues 219 to 223 (YPELR) lie on the Extracellular side of the membrane. The chain crosses the membrane as a helical span at residues 224 to 242 (INRLLRVARMFEFFQRTET). At 243-249 (RTNYPNI) the chain is on the cytoplasmic side. The helical transmembrane segment at 250–273 (FRISNLVMYIVIIIHWNACVYYSI) threads the bilayer. Residues 274–296 (SKAIGFGADTWVYPNTSHPEFAR) are Extracellular-facing. Transmembrane regions (helical) follow at residues 297 to 331 (LTRKYVYSLYWSTLTLTTIGETPPPVRDSEYFFVV) and 332 to 356 (VDFLVGVLIFATIVGNVGSMISNMN). Residues 357–645 (AARAEFQAKI…TDKPGVTKTE (289 aa)) lie on the Cytoplasmic side of the membrane. 3',5'-cyclic GMP-binding positions include 439–561 (LLVE…DGLL), Glu-498, and Arg-513.

Belongs to the cyclic nucleotide-gated cation channel (TC 1.A.1.5) family.

It is found in the membrane. Visual signal transduction is mediated by a G-protein coupled cascade using cGMP as second messenger. This protein can be activated by cGMP which leads to an opening of the cation channel and thereby causing a depolarization of rod photoreceptors. The chain is Cyclic nucleotide-gated channel rod photoreceptor subunit alpha from Gallus gallus (Chicken).